The sequence spans 332 residues: F-box/SPRY domain-containing protein 1 (332 aa).

A compositionally biased stretch (acidic residues) spans 1–10 (MTENNEETIV). The interval 1–81 (MTENNEETIV…RRSPRRPEVS (81 aa)) is disordered. The span at 15 to 24 (CNLTSSTPMK) shows a compositional bias: polar residues. In terms of domain architecture, F-box spans 79 to 127 (EVSASRLPLKVLNQIFQYLSLKDLRSAMLTCHSWNNALSMEDSDIWQQL). The B30.2/SPRY domain occupies 138-330 (SDPFLFVELR…VTMVYVGSPQ (193 aa)).

This sequence belongs to the FBXO45/Fsn family. Component of an SCF (SKP1-CUL1-F-box protein) E3 ubiquitin ligase complex composed of cul-1, fsn-1, rpm-1 and skr-1. Interacts (via SPRY domain) with scd-2 (via cytoplasmic domain). Interacts (via SPRY domain) with convertase egl-3 (via C-terminus).

Its subcellular location is the synapse. It functions in the pathway protein modification; protein ubiquitination. In terms of biological role, component of a SCF (SKP1-CUL1-F-box protein) E3 ubiquitin ligase complex which is required for the restriction and/or maturation of synapses in GABAergic neuromuscular junction (NMJ) presynaptic neurons. Promotes NRJ synapse development and synaptic transmission by negatively regulating the daf-2/InsR pathway in muscles. By targeting convertase egl-3 for degradation, negatively modulates insulin-like protein ins-4 and ins-6 processing. May stabilize synapse formation by promoting the down-regulation of scd-2. Regulates axon termination in PLM and ALM neurons. The chain is F-box/SPRY domain-containing protein 1 (fsn-1) from Caenorhabditis briggsae.